The chain runs to 196 residues: Imidazoleglycerol-phosphate dehydratase (196 aa).

This sequence belongs to the imidazoleglycerol-phosphate dehydratase family.

The protein resides in the cytoplasm. The enzyme catalyses D-erythro-1-(imidazol-4-yl)glycerol 3-phosphate = 3-(imidazol-4-yl)-2-oxopropyl phosphate + H2O. It participates in amino-acid biosynthesis; L-histidine biosynthesis; L-histidine from 5-phospho-alpha-D-ribose 1-diphosphate: step 6/9. The polypeptide is Imidazoleglycerol-phosphate dehydratase (Solidesulfovibrio magneticus (strain ATCC 700980 / DSM 13731 / RS-1) (Desulfovibrio magneticus)).